We begin with the raw amino-acid sequence, 547 residues long: Chaperonin GroEL (547 aa).

Residues 30–33 (TLGP), K51, 87–91 (DGTTT), G415, and D496 contribute to the ATP site. The tract at residues 527-547 (SDKAEPMPMRGGMGGMGGMDF) is disordered. The segment covering 537–547 (GGMGGMGGMDF) has biased composition (gly residues).

It belongs to the chaperonin (HSP60) family. As to quaternary structure, forms a cylinder of 14 subunits composed of two heptameric rings stacked back-to-back. Interacts with the co-chaperonin GroES.

It is found in the cytoplasm. It carries out the reaction ATP + H2O + a folded polypeptide = ADP + phosphate + an unfolded polypeptide.. Functionally, together with its co-chaperonin GroES, plays an essential role in assisting protein folding. The GroEL-GroES system forms a nano-cage that allows encapsulation of the non-native substrate proteins and provides a physical environment optimized to promote and accelerate protein folding. In Rickettsia rickettsii (strain Sheila Smith), this protein is Chaperonin GroEL.